Consider the following 94-residue polypeptide: Protein translocase subunit SecE (94 aa).

The tract at residues 1–32 is disordered; that stretch reads MTDAVGSIDMPDAQDEAPDSKKSRKGGKRGKK. Residues 22 to 32 show a composition bias toward basic residues; it reads KSRKGGKRGKK. Residues 65–85 traverse the membrane as a helical segment; that stretch reads TVVIIFVVIMIGLVTLIDYGF.

This sequence belongs to the SecE/SEC61-gamma family. Component of the Sec protein translocase complex. Heterotrimer consisting of SecY, SecE and SecG subunits. The heterotrimers can form oligomers, although 1 heterotrimer is thought to be able to translocate proteins. Interacts with the ribosome. Interacts with SecDF, and other proteins may be involved. Interacts with SecA.

The protein localises to the cell membrane. Essential subunit of the Sec protein translocation channel SecYEG. Clamps together the 2 halves of SecY. May contact the channel plug during translocation. The polypeptide is Protein translocase subunit SecE (Streptomyces lividans).